A 161-amino-acid polypeptide reads, in one-letter code: Endoribonuclease YbeY (161 aa).

Residues His120, His124, and Asp130 each contribute to the Zn(2+) site.

It belongs to the endoribonuclease YbeY family. Zn(2+) serves as cofactor.

Its subcellular location is the cytoplasm. Single strand-specific metallo-endoribonuclease involved in late-stage 70S ribosome quality control and in maturation of the 3' terminus of the 16S rRNA. This is Endoribonuclease YbeY from Chlamydia trachomatis serovar L2 (strain ATCC VR-902B / DSM 19102 / 434/Bu).